We begin with the raw amino-acid sequence, 750 residues long: Photosystem I P700 chlorophyll a apoprotein A1 (750 aa).

8 helical membrane-spanning segments follow: residues 70 to 93 (IFSAHFGQLSIIFLWLSGMYFHGA), 156 to 179 (LYCTAIGALVFAALMLFAGWFHYH), 195 to 219 (LNHHLAGLLGLGSLSWAGHQVHVSL), 291 to 309 (IAHHHLAIAILFLIAGHMY), 346 to 369 (WHAQLSLNLAMLGSLTIVVAHHMY), 385 to 411 (LSLFTHHMWIGGFLIVGAAAHAAIFMV), 433 to 455 (AIISHLNWVCIFLGFHSFGLYIH), and 531 to 549 (FLVHHIHAFTIHVTVLILL). Positions 573 and 582 each coordinate [4Fe-4S] cluster. 2 consecutive transmembrane segments (helical) span residues 589 to 610 (HVFLGLFWMYNSISVVIFHFSW) and 664 to 686 (LSAYGLLFLGAHFVWAFSLMFLF). Histidine 675 contacts chlorophyll a'. Chlorophyll a is bound by residues methionine 683 and tyrosine 691. Tryptophan 692 contacts phylloquinone. A helical transmembrane segment spans residues 724 to 744 (AVGVTHYLLGGIATTWAFFLA).

This sequence belongs to the PsaA/PsaB family. In terms of assembly, the PsaA/B heterodimer binds the P700 chlorophyll special pair and subsequent electron acceptors. PSI consists of a core antenna complex that captures photons, and an electron transfer chain that converts photonic excitation into a charge separation. The eukaryotic PSI reaction center is composed of at least 11 subunits. The cofactor is P700 is a chlorophyll a/chlorophyll a' dimer, A0 is one or more chlorophyll a, A1 is one or both phylloquinones and FX is a shared 4Fe-4S iron-sulfur center..

It localises to the plastid. The protein localises to the chloroplast thylakoid membrane. The enzyme catalyses reduced [plastocyanin] + hnu + oxidized [2Fe-2S]-[ferredoxin] = oxidized [plastocyanin] + reduced [2Fe-2S]-[ferredoxin]. PsaA and PsaB bind P700, the primary electron donor of photosystem I (PSI), as well as the electron acceptors A0, A1 and FX. PSI is a plastocyanin-ferredoxin oxidoreductase, converting photonic excitation into a charge separation, which transfers an electron from the donor P700 chlorophyll pair to the spectroscopically characterized acceptors A0, A1, FX, FA and FB in turn. Oxidized P700 is reduced on the lumenal side of the thylakoid membrane by plastocyanin. The sequence is that of Photosystem I P700 chlorophyll a apoprotein A1 from Gossypium hirsutum (Upland cotton).